The primary structure comprises 209 residues: MPIFLNFSAGSILPENELNSLRYIVQQNQNDTVIIRGRHQMEIRYIESVNGFTIHPVHSNHLSILMKRGNSLARNLERQINNGRSFEQVSRDFMLQLSLNIGWQKGAENALKSKIHSHAFIVNPDEFTCSKQYLECPITFCIPENGVFVKNSMDSKVCSLYDKSAIMQLIRKHHPHPLSREKIAKEMIIDKNNCYFDIMNQHFRILDTD.

The protein belongs to the NleG E3 ligase family. Two sizes of protein are detected in situ; only the smaller protein is secreted.

The protein localises to the secreted. Its subcellular location is the host cytoplasm. The enzyme catalyses S-ubiquitinyl-[E2 ubiquitin-conjugating enzyme]-L-cysteine + [acceptor protein]-L-lysine = [E2 ubiquitin-conjugating enzyme]-L-cysteine + N(6)-ubiquitinyl-[acceptor protein]-L-lysine.. Effector proteins function to alter host cell physiology and promote bacterial survival in host tissues. This protein is probably an E3 ubiquitin-protein ligase that interferes with the host's ubiquitination pathway and targets host proteins for proteasomal degradation. Mice infected with a strain of bacteria deleted for this gene were colonized less quickly by bacteria. This chain is Probable E3 ubiquitin-protein ligase NleG7, found in Citrobacter rodentium.